The chain runs to 167 residues: Protein-export protein SecB (167 aa).

The protein belongs to the SecB family. Homotetramer, a dimer of dimers. One homotetramer interacts with 1 SecA dimer.

Its subcellular location is the cytoplasm. One of the proteins required for the normal export of preproteins out of the cell cytoplasm. It is a molecular chaperone that binds to a subset of precursor proteins, maintaining them in a translocation-competent state. It also specifically binds to its receptor SecA. The chain is Protein-export protein SecB from Wolbachia pipientis wMel.